The primary structure comprises 118 residues: NADH-ubiquinone oxidoreductase chain 3 (118 aa).

3 helical membrane-spanning segments follow: residues 6-26 (IFVY…VSFL), 62-82 (LVSI…PWAV), and 87-107 (IGLF…IGFV).

It belongs to the complex I subunit 3 family.

The protein localises to the mitochondrion membrane. The catalysed reaction is a ubiquinone + NADH + 5 H(+)(in) = a ubiquinol + NAD(+) + 4 H(+)(out). Core subunit of the mitochondrial membrane respiratory chain NADH dehydrogenase (Complex I) that is believed to belong to the minimal assembly required for catalysis. Complex I functions in the transfer of electrons from NADH to the respiratory chain. The immediate electron acceptor for the enzyme is believed to be ubiquinone. This Marchantia polymorpha (Common liverwort) protein is NADH-ubiquinone oxidoreductase chain 3 (ND3).